The primary structure comprises 226 residues: Ribose-5-phosphate isomerase A (226 aa).

Substrate contacts are provided by residues 25–28 (TGST), 81–84 (DGAD), and 94–97 (KGGG). Glu103 (proton acceptor) is an active-site residue. Lys121 serves as a coordination point for substrate.

The protein belongs to the ribose 5-phosphate isomerase family. In terms of assembly, homodimer.

The catalysed reaction is aldehydo-D-ribose 5-phosphate = D-ribulose 5-phosphate. The protein operates within carbohydrate degradation; pentose phosphate pathway; D-ribose 5-phosphate from D-ribulose 5-phosphate (non-oxidative stage): step 1/1. Catalyzes the reversible conversion of ribose-5-phosphate to ribulose 5-phosphate. The chain is Ribose-5-phosphate isomerase A from Enterococcus faecalis (strain ATCC 700802 / V583).